A 451-amino-acid polypeptide reads, in one-letter code: Tubulin gamma-2 chain (451 aa).

The residue at position 131 (Ser131) is a Phosphoserine; by BRSK1. A GTP-binding site is contributed by 142-148 (AGGTGSG).

The protein belongs to the tubulin family. As to quaternary structure, component of the gamma-tubulin ring complex (gTuRC) consisting of TUBGCP2, TUBGCP3, TUBGCP4, TUBGCP5 and TUBGCP6 and gamma-tubulin TUBG1 or TUBG2. TUBGCP2, TUBGCP3, TUBGCP4, TUBGCP5 and TUBGCP6 assemble in a 5:5:2:1:1 stoichiometry; each is associated with a gamma-tubulin, thereby arranging 14 gamma-tubulins in a helical manner. Gamma-tubulin at the first position is blocked by TUBGCP3 at the last position, allowing 13 protafilaments to grow into a microtubule. Interacts with alpha-beta tubulin heterodimers; the interaction allows microtubules to nucleate from the gTuRC. In terms of processing, phosphorylation at Ser-131 by BRSK1 regulates centrosome duplication, possibly by mediating relocation of gamma-tubulin and its associated proteins from the cytoplasm to the centrosome.

The protein resides in the cytoplasm. It is found in the cytoskeleton. Its subcellular location is the microtubule organizing center. It localises to the centrosome. In terms of biological role, tubulin is the major constituent of microtubules, protein filaments consisting of alpha- and beta-tubulin heterodimers. Gamma-tubulin is a key component of the gamma-tubulin ring complex (gTuRC) which mediates microtubule nucleation. The gTuRC regulates the minus-end nucleation of alpha-beta tubulin heterodimers that grow into microtubule protafilaments, a critical step in centrosome duplication and spindle formation. The polypeptide is Tubulin gamma-2 chain (TUBG2) (Bos taurus (Bovine)).